The following is a 284-amino-acid chain: 4-diphosphocytidyl-2-C-methyl-D-erythritol kinase (284 aa).

Residue Lys22 is part of the active site. An ATP-binding site is contributed by 104-114 (PVGAGLGGASS). Asp146 is an active-site residue.

Belongs to the GHMP kinase family. IspE subfamily.

It carries out the reaction 4-CDP-2-C-methyl-D-erythritol + ATP = 4-CDP-2-C-methyl-D-erythritol 2-phosphate + ADP + H(+). Its pathway is isoprenoid biosynthesis; isopentenyl diphosphate biosynthesis via DXP pathway; isopentenyl diphosphate from 1-deoxy-D-xylulose 5-phosphate: step 3/6. In terms of biological role, catalyzes the phosphorylation of the position 2 hydroxy group of 4-diphosphocytidyl-2C-methyl-D-erythritol. The protein is 4-diphosphocytidyl-2-C-methyl-D-erythritol kinase of Hydrogenobaculum sp. (strain Y04AAS1).